The primary structure comprises 328 residues: Probable E3 ubiquitin-protein ligase RHC1A (328 aa).

An N-acetylserine modification is found at S2. An RING-type; atypical zinc finger spans residues 190–231 (CPVCKDEFELGSEAKQMPCNHIYHSDCIVPWLVQHNSCPVCR). The interval 233 to 324 (ELPSASGPSS…QQSYMGYSGW (92 aa)) is disordered. The segment covering 238–250 (SGPSSSQNRTTPT) has biased composition (polar residues). Composition is skewed to low complexity over residues 251-266 (RNYR…NSRE) and 275-290 (FSSF…SSSS). Positions 291-300 (TQNRGGTRNS) are enriched in polar residues.

The catalysed reaction is S-ubiquitinyl-[E2 ubiquitin-conjugating enzyme]-L-cysteine + [acceptor protein]-L-lysine = [E2 ubiquitin-conjugating enzyme]-L-cysteine + N(6)-ubiquitinyl-[acceptor protein]-L-lysine.. The protein operates within protein modification; protein ubiquitination. Its function is as follows. Probable E3 ubiquitin-protein ligase that may possess E3 ubiquitin ligase activity in vitro. This chain is Probable E3 ubiquitin-protein ligase RHC1A, found in Arabidopsis thaliana (Mouse-ear cress).